Consider the following 259-residue polypeptide: Enolase-phosphatase E1 (259 aa).

Asp-16 and Glu-18 together coordinate Mg(2+). Substrate-binding positions include 151–152 (SS) and Lys-185. Asp-210 contacts Mg(2+).

The protein belongs to the HAD-like hydrolase superfamily. MasA/MtnC family. In terms of assembly, monomer. The cofactor is Mg(2+).

Its subcellular location is the cytoplasm. It is found in the nucleus. The enzyme catalyses 5-methylsulfanyl-2,3-dioxopentyl phosphate + H2O = 1,2-dihydroxy-5-(methylsulfanyl)pent-1-en-3-one + phosphate. Its pathway is amino-acid biosynthesis; L-methionine biosynthesis via salvage pathway; L-methionine from S-methyl-5-thio-alpha-D-ribose 1-phosphate: step 3/6. The protein operates within amino-acid biosynthesis; L-methionine biosynthesis via salvage pathway; L-methionine from S-methyl-5-thio-alpha-D-ribose 1-phosphate: step 4/6. Bifunctional enzyme that catalyzes the enolization of 2,3-diketo-5-methylthiopentyl-1-phosphate (DK-MTP-1-P) into the intermediate 2-hydroxy-3-keto-5-methylthiopentenyl-1-phosphate (HK-MTPenyl-1-P), which is then dephosphorylated to form the acireductone 1,2-dihydroxy-3-keto-5-methylthiopentene (DHK-MTPene). The polypeptide is Enolase-phosphatase E1 (enoph1) (Xenopus tropicalis (Western clawed frog)).